A 261-amino-acid polypeptide reads, in one-letter code: MSPGRSVSGGRRAFHVKRSAREAFRRQLDAWGVKASREQLSLLEEYALLLAGYRRANVIGTREPETVLLEHVLDSASCLLFEPLRAAGRVADVGSGGGLPGIPLKILLPEARVVLIESTGKKADFLRYAIESLGLSGVDVVNARVEAVAREAAHRSRYDAALARAVAALPVLAEYCVPLLRVGGHAVAMKGGMPEHELRLGEGAAAVLGARLSGVLEVPRLPEVGEEKRRRLVILEKRRETPGRYPRKAGVPAKRPLRGGG.

Residues Gly-94, Leu-99, 117-119, 145-146, and Arg-164 contribute to the S-adenosyl-L-methionine site; these read EST and VE.

It belongs to the methyltransferase superfamily. RNA methyltransferase RsmG family.

It is found in the cytoplasm. Functionally, specifically methylates the N7 position of a guanine in 16S rRNA. In Rubrobacter xylanophilus (strain DSM 9941 / JCM 11954 / NBRC 16129 / PRD-1), this protein is Ribosomal RNA small subunit methyltransferase G.